The chain runs to 258 residues: Granzyme M (258 aa).

The 230-residue stretch at 21–250 (IIGGREAVPH…YSSWIRKVIG (230 aa)) folds into the Peptidase S1 domain. An intrachain disulfide couples Cys46 to Cys62. Active-site charge relay system residues include His61 and Asp107. Positions 122–141 (NVKPLALPRKPRDKPAEGSR) are disordered. Cystine bridges form between Cys142–Cys210, Cys173–Cys189, and Cys200–Cys226. N-linked (GlcNAc...) asparagine glycosylation is present at Asn174. Ser204 serves as the catalytic Charge relay system. Asn225 carries an N-linked (GlcNAc...) asparagine glycan.

The protein belongs to the peptidase S1 family. Granzyme subfamily.

It localises to the secreted. The protein resides in the cytoplasmic granule. Cleaves peptide substrates after methionine, leucine, and norleucine. Physiological substrates include EZR, alpha-tubulins and the apoptosis inhibitor BIRC5/Survivin. Promotes caspase activation and subsequent apoptosis of target cells. In Rattus norvegicus (Rat), this protein is Granzyme M (Gzmm).